The chain runs to 358 residues: Na(+)/H(+) exchange regulatory cofactor NHE-RF1 (358 aa).

Ser2 bears the N-acetylserine mark. Residues Ser2 and Ser46 each carry the phosphoserine modification. One can recognise a PDZ 1 domain in the interval 14-94; it reads LCCLEKGPNG…AVRLLVVDPE (81 aa). Positions 114 to 134 are enriched in low complexity; the sequence is QETPGQAEPAAAAEAQGAGNE. Disordered regions lie at residues 114–192 and 269–358; these read QETP…EASG and SREA…FSNL. Over residues 135–149 the composition is skewed to basic and acidic residues; that stretch reads NEPREADKSHPEQRK. The 81-residue stretch at 154–234 folds into the PDZ 2 domain; the sequence is LCTMKKGPSG…ETKLLVVDRE (81 aa). Residues Ser162, Ser269, Ser280, Ser290, and Ser291 each carry the phosphoserine modification. Over residues 287–306 the composition is skewed to polar residues; it reads RSASSDTSEELNSQDSPPKQ. At Thr293 the chain carries Phosphothreonine. A phosphoserine mark is found at Ser294, Ser299, and Ser302. The segment covering 307–319 has biased composition (low complexity); that stretch reads DSTAPSSTSSSDP. The segment covering 348-358 has biased composition (basic and acidic residues); it reads WSKKNELFSNL.

As to quaternary structure, homodimer, and heterodimer with NHERF2. Binds the N-termini of EZR, RDX and MSN. Binds the C-termini of PDGFRA, PDGFRB, ADRB2, NOS2 and CFTR. Binds ARHGAP17, EPI64, RACK1, OPRK1, GNAQ, CTNNB1 and PLCB3. Binds PDZK1. Interacts with CLCN3. Binds the C-terminus of PAG1. In resting T-cells, part of a PAG1-NHERF1-MSN complex which is disrupted upon TCR activation. Forms a complex with CFTR and SLC4A7. Forms a complex with SLC4A7 and ATP6V1B1. Interacts with TRPC4 (via the PDZ-binding domain). Directly interacts with HTR4. Interacts (via the PDZ 1 domain) with PODXL (via the C-terminal PDZ-binding motif DTHL); interaction is not detected in glomerular epithelium cells. Interacts (via the PDZ 1 domain) with PODXL (via the C-terminal PDZ-binding motif DTHL); the interaction take place early in the secretory pathway and is necessary for its apical membrane sorting. Interacts with SLC26A3. Interacts with MCC. Interacts with SLC34A1. Interacts (via the PDZ domains) with SLC26A6 isoform 4 and isoform 5. Interacts (via PDZ domains) with ACE2 (via PDZ-binding motif); the interaction may enhance ACE2 membrane residence. Phosphorylated on serine residues.

The protein localises to the cytoplasm. The protein resides in the apical cell membrane. It is found in the endomembrane system. It localises to the cell projection. Its subcellular location is the filopodium. The protein localises to the ruffle. The protein resides in the microvillus. Functionally, scaffold protein that connects plasma membrane proteins with members of the ezrin/moesin/radixin family and thereby helps to link them to the actin cytoskeleton and to regulate their surface expression. Necessary for recycling of internalized ADRB2. Was first known to play a role in the regulation of the activity and subcellular location of SLC9A3. Necessary for cAMP-mediated phosphorylation and inhibition of SLC9A3. Involved in sperm capacitation. May participate in the regulation of the chloride and bicarbonate homeostasis in spermatozoa. May enhance Wnt signaling. May participate in HTR4 targeting to microvilli. Involved in the regulation of phosphate reabsorption in the renal proximal tubules. The sequence is that of Na(+)/H(+) exchange regulatory cofactor NHE-RF1 (NHERF1) from Macaca fascicularis (Crab-eating macaque).